A 166-amino-acid chain; its full sequence is MMASILLTLFRRTKKKYKRHTDDQASNNQVPKTGQEHGRTSCRAPVENMNRLRGECLRMMEVLKEEMWRIYPVLLPQMELLDKECQTPELGQKTQMTYNWTQWLQTLYTMIMEENVPDMDLLQALREGGVITCQEHTMGMYVLYLIQRCCPMLPKLQFLKKLGKLI.

Residues Tyr-17–Cys-42 form a disordered region.

May counteract the cellular interferon antiviral system. This chain is Protein C (P/V/C), found in Hendra virus (isolate Horse/Autralia/Hendra/1994).